We begin with the raw amino-acid sequence, 1638 residues long: Chromatin-remodeling ATPase INO80 (1638 aa).

Residues 41–93 (SLRKPLSSDEETDDEHVVKREHDVQDSDDSSTVGVVRMKQSSKRKSRLLASKE) are disordered. A phosphoserine mark is found at S47 and S48. At T52 the chain carries Phosphothreonine. Over residues 55-65 (EHVVKREHDVQ) the composition is skewed to basic and acidic residues. S67 and S70 each carry phosphoserine. A coiled-coil region spans residues 136-161 (VQQLLREHVREQRQRKNYYKKAANAQ). The disordered stretch occupies residues 201–259 (RLAEAQAGPKPPKQRRRGRKKRDNMGSPESGEVPPSELGKYTFGDTLPNNEDDDEDGGE). Basic residues predominate over residues 212–222 (PKQRRRGRKKR). S227 and S230 each carry phosphoserine. The span at 250-259 (NEDDDEDGGE) shows a compositional bias: acidic residues. The region spanning 313 to 438 (IWQIMSKKES…AHFMSKKLGQ (126 aa)) is the DBINO domain. Residues 499-528 (KEKEEEEQAQESVEDIKPEPRPEMKDLPQP) form a disordered region. Positions 502-511 (EEEEQAQESV) are enriched in acidic residues. Basic and acidic residues predominate over residues 512–526 (EDIKPEPRPEMKDLP). In terms of domain architecture, Helicase ATP-binding spans 547–718 (ANIYDQGISG…WALLHFIMPT (172 aa)). 560–567 (DEMGLGKT) lines the ATP pocket. In terms of domain architecture, Helicase C-terminal spans 1160-1315 (VLDNLLTRLK…GGNFKPDTLK (156 aa)). Disordered regions lie at residues 1335 to 1364 (QEAKLQSSSPIPAATQSERKRRHPQKDVNM) and 1463 to 1638 (FLDD…VGPE). The segment covering 1338-1350 (KLQSSSPIPAATQ) has biased composition (polar residues). Over residues 1473-1495 (MRRRHHPRGTRRGRPRGSTRRGG) the composition is skewed to basic residues. Composition is skewed to low complexity over residues 1505–1534 (TPTQAATPAVPATASQAAAAGTGAAAGTSS) and 1618–1627 (SPATSRAPSP).

This sequence belongs to the SNF2/RAD54 helicase family. Component of the chromatin remodeling Ino80 complex.

It is found in the nucleus. The catalysed reaction is ATP + H2O = ADP + phosphate + H(+). Its function is as follows. ATPase component of the chromatin remodeling INO80 complex which is involved in transcriptional regulation, DNA replication and DNA repair. Binds DNA. As part of the INO80 complex, remodels chromatin by shifting nucleosomes. The sequence is that of Chromatin-remodeling ATPase INO80 from Drosophila melanogaster (Fruit fly).